Here is a 290-residue protein sequence, read N- to C-terminus: ATP synthase gamma chain (290 aa).

This sequence belongs to the ATPase gamma chain family. As to quaternary structure, F-type ATPases have 2 components, CF(1) - the catalytic core - and CF(0) - the membrane proton channel. CF(1) has five subunits: alpha(3), beta(3), gamma(1), delta(1), epsilon(1). CF(0) has three main subunits: a, b and c.

The protein localises to the cell inner membrane. Produces ATP from ADP in the presence of a proton gradient across the membrane. The gamma chain is believed to be important in regulating ATPase activity and the flow of protons through the CF(0) complex. The sequence is that of ATP synthase gamma chain from Dictyoglomus turgidum (strain DSM 6724 / Z-1310).